Here is a 198-residue protein sequence, read N- to C-terminus: Glycerol-3-phosphate acyltransferase (198 aa).

The next 5 membrane-spanning stretches (helical) occupy residues 1 to 21, 52 to 72, 81 to 101, 115 to 135, and 153 to 173; these read MILITSLAVLVSYLIGSIPAA, GPALLVAAFDILKGAIAVGLA, WTALCGVAAVLGHNFSPFLGF, LALDPVVGGGAFVVGVGCIWL, and LAAALARPGWLLLIVAFLAAL.

Belongs to the PlsY family. Probably interacts with PlsX.

The protein resides in the cell membrane. It carries out the reaction an acyl phosphate + sn-glycerol 3-phosphate = a 1-acyl-sn-glycero-3-phosphate + phosphate. It participates in lipid metabolism; phospholipid metabolism. Functionally, catalyzes the transfer of an acyl group from acyl-phosphate (acyl-PO(4)) to glycerol-3-phosphate (G3P) to form lysophosphatidic acid (LPA). This enzyme utilizes acyl-phosphate as fatty acyl donor, but not acyl-CoA or acyl-ACP. This chain is Glycerol-3-phosphate acyltransferase, found in Deinococcus geothermalis (strain DSM 11300 / CIP 105573 / AG-3a).